Consider the following 48-residue polypeptide: DNA gyrase inhibitor YacG (48 aa).

Zn(2+) is bound by residues Cys9, Cys12, Cys28, and Cys32.

Belongs to the DNA gyrase inhibitor YacG family. In terms of assembly, interacts with GyrB. Requires Zn(2+) as cofactor.

Inhibits all the catalytic activities of DNA gyrase by preventing its interaction with DNA. Acts by binding directly to the C-terminal domain of GyrB, which probably disrupts DNA binding by the gyrase. The sequence is that of DNA gyrase inhibitor YacG from Wigglesworthia glossinidia brevipalpis.